The primary structure comprises 494 residues: Aspartyl/glutamyl-tRNA(Asn/Gln) amidotransferase subunit B (494 aa).

It belongs to the GatB/GatE family. GatB subfamily. Heterotrimer of A, B and C subunits.

The catalysed reaction is L-glutamyl-tRNA(Gln) + L-glutamine + ATP + H2O = L-glutaminyl-tRNA(Gln) + L-glutamate + ADP + phosphate + H(+). It carries out the reaction L-aspartyl-tRNA(Asn) + L-glutamine + ATP + H2O = L-asparaginyl-tRNA(Asn) + L-glutamate + ADP + phosphate + 2 H(+). In terms of biological role, allows the formation of correctly charged Asn-tRNA(Asn) or Gln-tRNA(Gln) through the transamidation of misacylated Asp-tRNA(Asn) or Glu-tRNA(Gln) in organisms which lack either or both of asparaginyl-tRNA or glutaminyl-tRNA synthetases. The reaction takes place in the presence of glutamine and ATP through an activated phospho-Asp-tRNA(Asn) or phospho-Glu-tRNA(Gln). The protein is Aspartyl/glutamyl-tRNA(Asn/Gln) amidotransferase subunit B of Synechococcus sp. (strain CC9902).